We begin with the raw amino-acid sequence, 273 residues long: 4-hydroxy-tetrahydrodipicolinate reductase (273 aa).

Residues 12–17 (GAGGRM) and E38 contribute to the NAD(+) site. R39 is a binding site for NADP(+). NAD(+) contacts are provided by residues 102–104 (GTT) and 126–129 (AANF). H159 functions as the Proton donor/acceptor in the catalytic mechanism. H160 is a (S)-2,3,4,5-tetrahydrodipicolinate binding site. K163 acts as the Proton donor in catalysis. 169–170 (GT) is a binding site for (S)-2,3,4,5-tetrahydrodipicolinate.

The protein belongs to the DapB family. As to quaternary structure, homotetramer.

The protein localises to the cytoplasm. It catalyses the reaction (S)-2,3,4,5-tetrahydrodipicolinate + NAD(+) + H2O = (2S,4S)-4-hydroxy-2,3,4,5-tetrahydrodipicolinate + NADH + H(+). The enzyme catalyses (S)-2,3,4,5-tetrahydrodipicolinate + NADP(+) + H2O = (2S,4S)-4-hydroxy-2,3,4,5-tetrahydrodipicolinate + NADPH + H(+). Its pathway is amino-acid biosynthesis; L-lysine biosynthesis via DAP pathway; (S)-tetrahydrodipicolinate from L-aspartate: step 4/4. Catalyzes the conversion of 4-hydroxy-tetrahydrodipicolinate (HTPA) to tetrahydrodipicolinate. This chain is 4-hydroxy-tetrahydrodipicolinate reductase, found in Shigella boydii serotype 18 (strain CDC 3083-94 / BS512).